A 466-amino-acid chain; its full sequence is 3-isopropylmalate dehydratase large subunit (466 aa).

[4Fe-4S] cluster contacts are provided by C346, C406, and C409.

The protein belongs to the aconitase/IPM isomerase family. LeuC type 1 subfamily. In terms of assembly, heterodimer of LeuC and LeuD. [4Fe-4S] cluster is required as a cofactor.

It carries out the reaction (2R,3S)-3-isopropylmalate = (2S)-2-isopropylmalate. Its pathway is amino-acid biosynthesis; L-leucine biosynthesis; L-leucine from 3-methyl-2-oxobutanoate: step 2/4. Functionally, catalyzes the isomerization between 2-isopropylmalate and 3-isopropylmalate, via the formation of 2-isopropylmaleate. This Alteromonas mediterranea (strain DSM 17117 / CIP 110805 / LMG 28347 / Deep ecotype) protein is 3-isopropylmalate dehydratase large subunit.